A 236-amino-acid chain; its full sequence is Small ribosomal subunit protein uS2c (236 aa).

This sequence belongs to the universal ribosomal protein uS2 family.

It is found in the plastid. Its subcellular location is the chloroplast. In Nandina domestica (Heavenly bamboo), this protein is Small ribosomal subunit protein uS2c (rps2).